A 194-amino-acid chain; its full sequence is dTTP/UTP pyrophosphatase (194 aa).

The active-site Proton acceptor is Asp-76.

The protein belongs to the Maf family. YhdE subfamily. A divalent metal cation is required as a cofactor.

It localises to the cytoplasm. The catalysed reaction is dTTP + H2O = dTMP + diphosphate + H(+). It catalyses the reaction UTP + H2O = UMP + diphosphate + H(+). Nucleoside triphosphate pyrophosphatase that hydrolyzes dTTP and UTP. May have a dual role in cell division arrest and in preventing the incorporation of modified nucleotides into cellular nucleic acids. The polypeptide is dTTP/UTP pyrophosphatase (Shewanella oneidensis (strain ATCC 700550 / JCM 31522 / CIP 106686 / LMG 19005 / NCIMB 14063 / MR-1)).